Reading from the N-terminus, the 346-residue chain is Holliday junction branch migration complex subunit RuvB (346 aa).

Basic and acidic residues predominate over residues 1 to 16 (MSDADRLITPEKRGED). Residues 1–23 (MSDADRLITPEKRGEDIDTTLRP) are disordered. Residues 1–182 (MSDADRLITP…FGIPVRLAFY (182 aa)) form a large ATPase domain (RuvB-L) region. ATP contacts are provided by residues L21, R22, G63, K66, T67, T68, 129 to 131 (EDF), R172, Y182, and R219. T67 contacts Mg(2+). Residues 183–253 (TVDELELIVR…IADEALTRLL (71 aa)) form a small ATPAse domain (RuvB-S) region. Residues 256–346 (NMGLDQLDMR…AQFRLTLEDD (91 aa)) are head domain (RuvB-H). Residues R292, R311, and R316 each contribute to the DNA site.

The protein belongs to the RuvB family. In terms of assembly, homohexamer. Forms an RuvA(8)-RuvB(12)-Holliday junction (HJ) complex. HJ DNA is sandwiched between 2 RuvA tetramers; dsDNA enters through RuvA and exits via RuvB. An RuvB hexamer assembles on each DNA strand where it exits the tetramer. Each RuvB hexamer is contacted by two RuvA subunits (via domain III) on 2 adjacent RuvB subunits; this complex drives branch migration. In the full resolvosome a probable DNA-RuvA(4)-RuvB(12)-RuvC(2) complex forms which resolves the HJ.

The protein resides in the cytoplasm. It carries out the reaction ATP + H2O = ADP + phosphate + H(+). The RuvA-RuvB-RuvC complex processes Holliday junction (HJ) DNA during genetic recombination and DNA repair, while the RuvA-RuvB complex plays an important role in the rescue of blocked DNA replication forks via replication fork reversal (RFR). RuvA specifically binds to HJ cruciform DNA, conferring on it an open structure. The RuvB hexamer acts as an ATP-dependent pump, pulling dsDNA into and through the RuvAB complex. RuvB forms 2 homohexamers on either side of HJ DNA bound by 1 or 2 RuvA tetramers; 4 subunits per hexamer contact DNA at a time. Coordinated motions by a converter formed by DNA-disengaged RuvB subunits stimulates ATP hydrolysis and nucleotide exchange. Immobilization of the converter enables RuvB to convert the ATP-contained energy into a lever motion, pulling 2 nucleotides of DNA out of the RuvA tetramer per ATP hydrolyzed, thus driving DNA branch migration. The RuvB motors rotate together with the DNA substrate, which together with the progressing nucleotide cycle form the mechanistic basis for DNA recombination by continuous HJ branch migration. Branch migration allows RuvC to scan DNA until it finds its consensus sequence, where it cleaves and resolves cruciform DNA. This is Holliday junction branch migration complex subunit RuvB from Agrobacterium fabrum (strain C58 / ATCC 33970) (Agrobacterium tumefaciens (strain C58)).